The primary structure comprises 331 residues: Acyl-CoA desaturase 1 (331 aa).

Over 1 to 46 the chain is Cytoplasmic; the sequence is MTEVDDGCGGRLRGSVLLEDECDLKQECETPTHSLVQGRDPPVVVV. Residues 47–67 traverse the membrane as a helical segment; it reads WRNVVLMSVLHTAAVYGLVLL. Residue Asn-49 coordinates substrate. Over 68–71 the chain is Lumenal; sequence PSAS. Residues 72 to 90 form a helical membrane-spanning segment; the sequence is AYTLLAFCFVSSALGITAG. Topologically, residues 91 to 189 are cytoplasmic; sequence AHRLWSHRSY…DRVVMFQRRF (99 aa). Residues His-92 and His-97 each contribute to the Fe cation site. The Histidine box-1 motif lies at 92–97; it reads HRLWSH. Substrate-binding residues include Asn-120, Arg-127, and Asp-128. Fe cation-binding residues include His-129, His-132, and His-133. The Histidine box-2 motif lies at 129–133; sequence HRVHH. Lys-161 is a substrate binding site. Residues 190-209 form a helical membrane-spanning segment; it reads YKHSVVVMCFLIPAMLPWFL. The Lumenal portion of the chain corresponds to 210-213; sequence WAES. A helical transmembrane segment spans residues 214–235; the sequence is LWVGYFVPVLLRYALVLNATWL. Residue Trp-234 coordinates substrate. Over 236-331 the chain is Cytoplasmic; sequence VNSAAHMWGN…RTGDGSHRSG (96 aa). 4 residues coordinate Fe cation: His-241, His-270, His-273, and His-274. The Histidine box-3 motif lies at 270–274; that stretch reads HNYHH.

This sequence belongs to the fatty acid desaturase type 1 family. It depends on Fe(2+) as a cofactor. Expression is highest in liver, followed by brain and intestine, and lowest in spleen. Also expressed in heart, gill and muscle.

The protein resides in the endoplasmic reticulum membrane. It catalyses the reaction octadecanoyl-CoA + 2 Fe(II)-[cytochrome b5] + O2 + 2 H(+) = (9Z)-octadecenoyl-CoA + 2 Fe(III)-[cytochrome b5] + 2 H2O. Its function is as follows. Stearoyl-CoA desaturase that utilizes O(2) and electrons from reduced cytochrome b5 to introduce the first double bond into saturated fatty acyl-CoA substrates. Catalyzes the insertion of a cis double bond at the delta-9 position into fatty acyl-CoA substrates including palmitoyl-CoA and stearoyl-CoA. Contributes to the biosynthesis of membrane phospholipids, cholesterol esters and triglycerides. In Tachysurus fulvidraco (Yellow catfish), this protein is Acyl-CoA desaturase 1.